Consider the following 452-residue polypeptide: Phosphoglucosamine mutase (452 aa).

Serine 105 acts as the Phosphoserine intermediate in catalysis. Serine 105, aspartate 244, aspartate 246, and aspartate 248 together coordinate Mg(2+). The residue at position 105 (serine 105) is a Phosphoserine.

The protein belongs to the phosphohexose mutase family. Mg(2+) serves as cofactor. In terms of processing, activated by phosphorylation.

It carries out the reaction alpha-D-glucosamine 1-phosphate = D-glucosamine 6-phosphate. Catalyzes the conversion of glucosamine-6-phosphate to glucosamine-1-phosphate. This is Phosphoglucosamine mutase from Blochmanniella floridana.